A 171-amino-acid chain; its full sequence is S-ribosylhomocysteine lyase (171 aa).

Fe cation contacts are provided by His54, His58, and Cys128.

Belongs to the LuxS family. Homodimer. Requires Fe cation as cofactor.

It catalyses the reaction S-(5-deoxy-D-ribos-5-yl)-L-homocysteine = (S)-4,5-dihydroxypentane-2,3-dione + L-homocysteine. Involved in the synthesis of autoinducer 2 (AI-2) which is secreted by bacteria and is used to communicate both the cell density and the metabolic potential of the environment. The regulation of gene expression in response to changes in cell density is called quorum sensing. Catalyzes the transformation of S-ribosylhomocysteine (RHC) to homocysteine (HC) and 4,5-dihydroxy-2,3-pentadione (DPD). The protein is S-ribosylhomocysteine lyase of Photorhabdus laumondii subsp. laumondii (strain DSM 15139 / CIP 105565 / TT01) (Photorhabdus luminescens subsp. laumondii).